A 25-amino-acid chain; its full sequence is MFSLSNSQYTCQDYISDHIWKTSSH.

The protein belongs to the arginine attenuator peptide family.

Arginine attenuator peptide (AAP) that has a regulatory role in the production of arginine-specific carbamoyl phosphate synthetase. Encoded by an upstream open reading frame (uORF) within the 5'-leader region of arginine-specific carbamoyl phosphate synthetase small chain (CPA1) mRNA, it attenuates the translation of the downstream CPA1 ORF. In the presence of high concentrations of arginine, ribosomes translating the uORF encoding AAP stall at the termination codon, resulting in reduced translation from the downstream CPA1 initiation codon. This chain is Arginine attenuator peptide, found in Saccharomyces cerevisiae (strain ATCC 204508 / S288c) (Baker's yeast).